The sequence spans 871 residues: Protein translocase subunit SecA (871 aa).

Residues Gln-80, Gly-98–Thr-102, and Asp-537 contribute to the ATP site.

This sequence belongs to the SecA family. Monomer and homodimer. Part of the essential Sec protein translocation apparatus which comprises SecA, SecYEG and auxiliary proteins SecDF. Other proteins may also be involved.

Its subcellular location is the cell inner membrane. The protein resides in the cytoplasm. It catalyses the reaction ATP + H2O + cellular proteinSide 1 = ADP + phosphate + cellular proteinSide 2.. In terms of biological role, part of the Sec protein translocase complex. Interacts with the SecYEG preprotein conducting channel. Has a central role in coupling the hydrolysis of ATP to the transfer of proteins into and across the cell membrane, serving as an ATP-driven molecular motor driving the stepwise translocation of polypeptide chains across the membrane. In Thermotoga sp. (strain RQ2), this protein is Protein translocase subunit SecA.